The chain runs to 179 residues: Inner membrane-spanning protein YciB (179 aa).

5 consecutive transmembrane segments (helical) span residues 22-42 (IYAA…YSWV), 50-70 (MALI…FFHN), 76-96 (WKVT…QWVM), 121-141 (LAWA…AFWL), and 149-169 (FKVF…GIYI).

The protein belongs to the YciB family.

The protein localises to the cell inner membrane. Functionally, plays a role in cell envelope biogenesis, maintenance of cell envelope integrity and membrane homeostasis. This Shigella boydii serotype 4 (strain Sb227) protein is Inner membrane-spanning protein YciB.